The chain runs to 98 residues: MSMVYINIFLAFTMSLMGLLMYRSHLMSSLLCLEGMMLSLFIMMAVAILNNHFTLASMTPIILLVFAACEAALGLSLLVMVSNTYGTDYVQNLNLLQC.

A run of 3 helical transmembrane segments spans residues 1–21 (MSMVYINIFLAFTMSLMGLLM), 29–49 (SLLCLEGMMLSLFIMMAVAIL), and 61–81 (IILLVFAACEAALGLSLLVMV).

Belongs to the complex I subunit 4L family. Core subunit of respiratory chain NADH dehydrogenase (Complex I) which is composed of 45 different subunits.

It is found in the mitochondrion inner membrane. It catalyses the reaction a ubiquinone + NADH + 5 H(+)(in) = a ubiquinol + NAD(+) + 4 H(+)(out). In terms of biological role, core subunit of the mitochondrial membrane respiratory chain NADH dehydrogenase (Complex I) which catalyzes electron transfer from NADH through the respiratory chain, using ubiquinone as an electron acceptor. Part of the enzyme membrane arm which is embedded in the lipid bilayer and involved in proton translocation. The sequence is that of NADH-ubiquinone oxidoreductase chain 4L (MT-ND4L) from Puma concolor (Mountain lion).